The following is a 72-amino-acid chain: LKHEDTNLHISSQCWLKCLKNSKHNVVISSRGGLLFLRGMSHHPKPPQLRAVWAQSQEEGAPFLVLPLVQKP.

This sequence belongs to the arrestin family. Adrenal, cerebral cortex, heart, hypothalamus, intestine, liver, lung, pituitary, retina and testis.

This is Arrestin-E (Ear) from Rattus norvegicus (Rat).